The chain runs to 541 residues: Light-independent protochlorophyllide reductase subunit B (541 aa).

Asp-36 is a [4Fe-4S] cluster binding site. Catalysis depends on Asp-286, which acts as the Proton donor. Position 421-422 (421-422 (GM)) interacts with substrate.

This sequence belongs to the ChlB/BchB/BchZ family. In terms of assembly, protochlorophyllide reductase is composed of three subunits; BchL, BchN and BchB. Forms a heterotetramer of two BchB and two BchN subunits. Requires [4Fe-4S] cluster as cofactor.

The catalysed reaction is chlorophyllide a + oxidized 2[4Fe-4S]-[ferredoxin] + 2 ADP + 2 phosphate = protochlorophyllide a + reduced 2[4Fe-4S]-[ferredoxin] + 2 ATP + 2 H2O. It functions in the pathway porphyrin-containing compound metabolism; bacteriochlorophyll biosynthesis (light-independent). Component of the dark-operative protochlorophyllide reductase (DPOR) that uses Mg-ATP and reduced ferredoxin to reduce ring D of protochlorophyllide (Pchlide) to form chlorophyllide a (Chlide). This reaction is light-independent. The NB-protein (BchN-BchB) is the catalytic component of the complex. The sequence is that of Light-independent protochlorophyllide reductase subunit B from Chloroflexus aurantiacus (strain ATCC 29364 / DSM 637 / Y-400-fl).